An 870-amino-acid chain; its full sequence is Dynamin-2 (870 aa).

The 267-residue stretch at His-28 to Pro-294 folds into the Dynamin-type G domain. The interval Gly-38–Ser-45 is G1 motif. GDP is bound by residues Ser-41, Gly-43, Lys-44, Ser-45, Ser-46, Arg-59, and Gly-60. Residues Val-64–Arg-66 form a G2 motif region. The segment at Asp-136–Gly-139 is G3 motif. The interval Thr-205–Asp-208 is G4 motif. GDP contacts are provided by Lys-206, Asp-208, and Asp-211. Tyr-231 bears the Phosphotyrosine mark. The segment at Val-235–Ser-238 is G5 motif. GDP-binding residues include Asn-236, Arg-237, and Gln-239. Position 299 is an N6-acetyllysine (Lys-299). The 107-residue stretch at Leu-519 to Val-625 folds into the PH domain. Tyr-597 carries the post-translational modification Phosphotyrosine. At Lys-598 the chain carries N6-acetyllysine. The GED domain occupies Val-653–Val-744. The interval Thr-741–Asp-870 is disordered. Thr-755 is modified (phosphothreonine). Positions Trp-756–Pro-767 are enriched in polar residues. Ser-764 carries the post-translational modification Phosphoserine; by CDK1. Pro residues predominate over residues Ser-826–Val-846. Residues Pro-847–Ala-864 are compositionally biased toward low complexity.

The protein belongs to the TRAFAC class dynamin-like GTPase superfamily. Dynamin/Fzo/YdjA family. Oligomerizes into a helical polymer that self-assembles around the vesicle membrane, when associated to the menbrane through lipid binding. Interacts with SHANK1 and SHANK2. Interacts with SNX9. Interacts (via C-terminal proline-rich domain (PRD)) with SNX18 (via SH3 domain); this interaction regulates ATG9A and ATG16L1 trafficking from recycling endosomes to sites of autophagosome formation. Interacts with SNX33 (via SH3 domain). Interacts with MYO1E (via SH3 domain). Interacts with PSTPIP1 (via SH3 domain). Interacts with CTNND2. Interacts (via C-terminal proline-rich domain (PRD)) with BIN1 (via SH3 domain); this interaction allows the recruitment of DNM2 to the membrane tubules and inhibits self-assembly-stimulated GTPase activity on the membrane. Interacts with GABARAP, GABARAPL1 and GABARAPL2. Interacts with MAP1LC3B (the lipidate and non-lipidated LC3 form); this interaction mediates recycling endosome scission leading to autophagosome release. Interacts with ITSN1. Interacts (via C-terminal proline-rich domain (PRD)) with SH3BP4 (via SH3 domain); this interaction controls the GTPase activity and is prevented by EGFR-induced tyrosine phosphorylation of either DNM2 or SH3BP4. Interacts with MYOF. May interact with PIK3C3. May be a component of a complex composed of RAB5A (in GDP-bound form), DYN2 and PIK3C3. Interacts with SDC4; this interaction is markedly enhanced at focal ahesion site upon induction of focal adhesions and stress-fiber formation. Interacts with ACTN1. Interacts with CTTN; this interaction stimulates the intrinsic GTPase activity of DNM2 and stabilizes the association of DNM2 and actin filaments; in addition this interaction is stimulated by ligand binding to the receptor, leading to the recruitment of the DNM2-CTTN complex to the sequestered receptor-ligand complex to its internalization. Interacts with NOSTRIN (via SH3 domain); this interaction allows the recruitment of NOS3 to dynamin-positive structures. Interacts with TUBG1; this interaction may participate in centrosome cohesion. In terms of processing, phosphorylation at Ser-848 by GSK3-alpha relieves the inhibition of BIN1 and promotes endocytosis. Phosphorylation at Ser-764 by CDK1 is greatly increased upon mitotic entry. It regulates cytokinesis downstream of calcineurin, and does not affect clathrin-mediated endocytosis. Dephosphorylated by calcineurin/PP2 during cytokinesis in a Ca(2+)- and calmodulin-dependent manner. Phosphorylated on tyrosine residues by EGFR. Phosphorylated on tyrosine residues after activation of SRC. Expressed in most tissues during embryonic development, including the peripheral nervous system although no expression is evident in skeletal muscle or heart.

It localises to the cytoplasm. The protein localises to the cytoskeleton. Its subcellular location is the cytoplasmic vesicle. It is found in the clathrin-coated vesicle. The protein resides in the cell projection. It localises to the uropodium. The protein localises to the endosome. Its subcellular location is the microtubule organizing center. It is found in the centrosome. The protein resides in the centriole. It localises to the recycling endosome. The protein localises to the phagocytic cup. Its subcellular location is the phagosome membrane. It is found in the podosome. The protein resides in the cell junction. It localises to the postsynaptic density. The protein localises to the synapse. Its subcellular location is the synaptosome. It is found in the midbody. The protein resides in the membrane. It localises to the clathrin-coated pit. The catalysed reaction is GTP + H2O = GDP + phosphate + H(+). Functionally, catalyzes the hydrolysis of GTP and utilizes this energy to mediate vesicle scission at plasma membrane during endocytosis and filament remodeling at many actin structures during organization of the actin cytoskeleton. Plays an important role in vesicular trafficking processes, namely clathrin-mediated endocytosis (CME), exocytic and clathrin-coated vesicle from the trans-Golgi network, and PDGF stimulated macropinocytosis. During vesicular trafficking process, associates to the membrane, through lipid binding, and self-assembles into ring-like structure through oligomerization to form a helical polymer around the vesicle membrane and leading to vesicle scission. Plays a role in organization of the actin cytoskeleton by mediating arrangement of stress fibers and actin bundles in podocytes. During organization of the actin cytoskeleton, self-assembles into ring-like structure that directly bundles actin filaments to form typical membrane tubules decorated with dynamin spiral polymers. Self-assembly increases GTPase activity and the GTP hydrolysis causes the rapid depolymerization of dynamin spiral polymers, and results in dispersion of actin bundles. Remodels, through its interaction with CTTN, bundled actin filaments in a GTPase-dependent manner and plays a role in orchestrating the global actomyosin cytoskeleton. The interaction with CTTN stabilizes the interaction of DNM2 and actin filaments and stimulates the intrinsic GTPase activity that results in actin filament-barbed ends and increases the sensitivity of filaments in bundles to the actin depolymerizing factor, CFL1. Plays a role in the autophagy process, by participating in the formation of ATG9A vesicles destined for the autophagosomes through its interaction with SNX18, by mediating recycling endosome scission leading to autophagosome release through MAP1LC3B interaction. Also regulates maturation of apoptotic cell corpse-containing phagosomes by recruiting PIK3C3 to the phagosome membrane. Also plays a role in cytokinesis. May participate in centrosome cohesion through its interaction with TUBG1. Plays a role in the regulation of neuron morphology, axon growth and formation of neuronal growth cones. Involved in membrane tubulation. This Mus musculus (Mouse) protein is Dynamin-2.